A 367-amino-acid polypeptide reads, in one-letter code: Adenine deaminase (367 aa).

The Zn(2+) site is built by His-19, His-21, and His-209. Glu-212 acts as the Proton donor in catalysis. Asp-290 is a binding site for Zn(2+). Residue Asp-291 participates in substrate binding.

The protein belongs to the metallo-dependent hydrolases superfamily. Adenosine and AMP deaminases family. Adenine deaminase type 2 subfamily. Zn(2+) serves as cofactor.

The protein localises to the cytoplasm. It is found in the nucleus. It carries out the reaction adenine + H2O + H(+) = hypoxanthine + NH4(+). Functionally, catalyzes the hydrolytic deamination of adenine to hypoxanthine. Plays an important role in the purine salvage pathway and in nitrogen catabolism. Also exhibits a low activity towards N(6)-substituted adenines that are commonly known as the plant hormones cytokinins. In Schizosaccharomyces pombe (strain 972 / ATCC 24843) (Fission yeast), this protein is Adenine deaminase.